Reading from the N-terminus, the 82-residue chain is MSDKIRTLQGRVTSNKMDKSITVAVERLVKHPIYGKFIKRTTKIHAHDELNQCNEGDIVTIRECRPLSKTKSWTLVDVVSKA.

Belongs to the universal ribosomal protein uS17 family. As to quaternary structure, part of the 30S ribosomal subunit.

Its function is as follows. One of the primary rRNA binding proteins, it binds specifically to the 5'-end of 16S ribosomal RNA. The sequence is that of Small ribosomal subunit protein uS17 from Shewanella amazonensis (strain ATCC BAA-1098 / SB2B).